The sequence spans 292 residues: Zinc metalloproteinase nas-3 (292 aa).

A signal peptide spans 1–16 (MYRFIIFFSLLALTAS). A Peptidase M12A domain is found at 56–249 (RGIAIHPWQW…RNINTLYKCN (194 aa)). Intrachain disulfides connect C103–C248 and C128–C158. Position 169 (H169) interacts with Zn(2+). E170 is an active-site residue. Residues H173 and H179 each contribute to the Zn(2+) site.

Zn(2+) serves as cofactor.

Its subcellular location is the secreted. Metalloprotease. In Caenorhabditis elegans, this protein is Zinc metalloproteinase nas-3 (nas-3).